Here is a 76-residue protein sequence, read N- to C-terminus: RNA-binding protein KhpA (76 aa).

The 48-residue stretch at 29–76 (QNIIELRVSPKDVGKVIGKNGRIAKSLRAILTAASVKAGKNFSLEIID) folds into the KH domain.

Belongs to the KhpA RNA-binding protein family. In terms of assembly, forms a complex with KhpB.

It localises to the cytoplasm. Functionally, a probable RNA chaperone. Forms a complex with KhpB which binds to cellular RNA and controls its expression. Plays a role in peptidoglycan (PG) homeostasis and cell length regulation. The protein is RNA-binding protein KhpA of Leptospira interrogans serogroup Icterohaemorrhagiae serovar copenhageni (strain Fiocruz L1-130).